A 182-amino-acid chain; its full sequence is Kappa-casein (182 aa).

A signal peptide spans 1–20; the sequence is MKSFLLVVNALALTLPFLAV. Thr-133, Thr-143, Thr-148, and Thr-151 each carry an O-linked (GalNAc...) threonine glycan. Thr-157 is subject to Phosphothreonine; alternate. O-linked (GalNAc...) threonine; alternate glycosylation is present at Thr-157. O-linked (GalNAc...) threonine glycans are attached at residues Thr-167, Thr-169, and Thr-178.

This sequence belongs to the kappa-casein family. Heteromultimers composed of alpha-s1 casein and kappa casein linked by disulfide bonds. In terms of processing, the N-terminus is blocked. As to expression, mammary gland specific. Secreted in milk.

It localises to the secreted. Its function is as follows. Kappa-casein stabilizes micelle formation, preventing casein precipitation in milk. This chain is Kappa-casein (CSN3), found in Homo sapiens (Human).